Reading from the N-terminus, the 640-residue chain is MDTSAVSYLSSIVLNNNYKEWNNEKIIKWLSDTKKIQKVIVFKIYEITGRDLEFLSDKILFKMGVGIRDLLSFKSEFEILKNNYDNNNNNNNNNNNNNNNNNNNNNNNNNNNNNNNNNNNNNNNNNNNNKNNNNSNSNSTNINNNCSNNNSNNNHINFNSNSNITNIKNNDSKIKNKKEENKVPIIDLNQYEYVESISLGVFSVVGKYKRKGQENEFIAIKKIDILSLNEEKIIKEINKLYSINHPNIIKIIGYCKDQKNYYIASKYYPKGSIKKNTKQSPYSEMNAKRISVKILSGIDYLHSLNPPIIHRDIKCDNILLDENDDPILIDFGLSYKTIDDSTNLKTLCKKPFWASPDVNNQEIQIFSEKTDIYSFGCTIFEMIVGWESYSKKENNQPNLQKLPDNLTISCRLALGDIIGLEQNFKPDSKDLQKLSWFNESLPPIFQSQELTKSTTNTTTTTTTTTTPPPPPSPSSSSPSMNENKKIVTSDCLINSFKESGCLIFLNGELMYDNPFDKDCYQYNIVIPFGTPHLREVIHKDKNKSKHLDKIELFIDDHLAKGLVIKLGNFKLDLSKEFKKTPTFIDSIIEYLLDLLQKDNDDDDDDDVPESIILNIAVGFYKYISNFITYQYVLNQPSHFC.

Residues 21–84 form the SAM domain; the sequence is WNNEKIIKWL…SEFEILKNNY (64 aa). Residues 73–100 are a coiled coil; it reads FKSEFEILKNNYDNNNNNNNNNNNNNNN. Residues 84–165 are disordered; the sequence is YDNNNNNNNN…INFNSNSNIT (82 aa). The 247-residue stretch at 191 to 437 folds into the Protein kinase domain; sequence YEYVESISLG…SKDLQKLSWF (247 aa). ATP is bound by residues 197–205 and Lys221; that span reads ISLGVFSVV. Asp312 (proton acceptor) is an active-site residue. Positions 448–482 are disordered; sequence QELTKSTTNTTTTTTTTTTPPPPPSPSSSSPSMNE. Residues 453–465 are compositionally biased toward low complexity; that stretch reads STTNTTTTTTTTT.

Belongs to the protein kinase superfamily. Ser/Thr protein kinase family.

It catalyses the reaction L-seryl-[protein] + ATP = O-phospho-L-seryl-[protein] + ADP + H(+). It carries out the reaction L-threonyl-[protein] + ATP = O-phospho-L-threonyl-[protein] + ADP + H(+). This is Probable serine/threonine-protein kinase samkA (samkA) from Dictyostelium discoideum (Social amoeba).